Here is a 644-residue protein sequence, read N- to C-terminus: DNA gyrase subunit B (644 aa).

One can recognise a Toprim domain in the interval 429–543 (CEIFLVEGDS…AGYVYIAQPP (115 aa)). The Mg(2+) site is built by E435, D508, and D510.

It belongs to the type II topoisomerase GyrB family. As to quaternary structure, heterotetramer, composed of two GyrA and two GyrB chains. In the heterotetramer, GyrA contains the active site tyrosine that forms a transient covalent intermediate with DNA, while GyrB binds cofactors and catalyzes ATP hydrolysis. The cofactor is Mg(2+). Mn(2+) is required as a cofactor. Requires Ca(2+) as cofactor.

It is found in the cytoplasm. The enzyme catalyses ATP-dependent breakage, passage and rejoining of double-stranded DNA.. Its function is as follows. A type II topoisomerase that negatively supercoils closed circular double-stranded (ds) DNA in an ATP-dependent manner to modulate DNA topology and maintain chromosomes in an underwound state. Negative supercoiling favors strand separation, and DNA replication, transcription, recombination and repair, all of which involve strand separation. Also able to catalyze the interconversion of other topological isomers of dsDNA rings, including catenanes and knotted rings. Type II topoisomerases break and join 2 DNA strands simultaneously in an ATP-dependent manner. The chain is DNA gyrase subunit B from Staphylococcus aureus (strain USA300).